The primary structure comprises 428 residues: Putative zinc metalloprotease SA1105 (428 aa).

H21 provides a ligand contact to Zn(2+). E22 is an active-site residue. H25 contributes to the Zn(2+) binding site. The next 4 helical transmembrane spans lie at 172–194 (FLTLFAGPLFNFILALVLFIGLA), 309–331 (GSTLIFTAVVGMLASIFTGGFSF), 352–374 (IISLIGYTALLSVNLGIMNLIPI), and 401–420 (TTIIAIGAIFMVVIMILVTW). A PDZ domain is found at 186-269 (ALVLFIGLAY…TKSVELTPKK (84 aa)).

It belongs to the peptidase M50B family. It depends on Zn(2+) as a cofactor.

It localises to the cell membrane. This is Putative zinc metalloprotease SA1105 from Staphylococcus aureus (strain N315).